The primary structure comprises 513 residues: ATP synthase subunit alpha (513 aa).

ATP is bound at residue 169–176 (GDRQTGKT).

This sequence belongs to the ATPase alpha/beta chains family. As to quaternary structure, F-type ATPases have 2 components, CF(1) - the catalytic core - and CF(0) - the membrane proton channel. CF(1) has five subunits: alpha(3), beta(3), gamma(1), delta(1), epsilon(1). CF(0) has three main subunits: a(1), b(2) and c(9-12). The alpha and beta chains form an alternating ring which encloses part of the gamma chain. CF(1) is attached to CF(0) by a central stalk formed by the gamma and epsilon chains, while a peripheral stalk is formed by the delta and b chains.

Its subcellular location is the cell inner membrane. It catalyses the reaction ATP + H2O + 4 H(+)(in) = ADP + phosphate + 5 H(+)(out). In terms of biological role, produces ATP from ADP in the presence of a proton gradient across the membrane. The alpha chain is a regulatory subunit. In Cupriavidus pinatubonensis (strain JMP 134 / LMG 1197) (Cupriavidus necator (strain JMP 134)), this protein is ATP synthase subunit alpha.